A 248-amino-acid chain; its full sequence is PF03932 family protein CutC (248 aa).

It belongs to the CutC family. Homodimer.

It is found in the cytoplasm. The polypeptide is PF03932 family protein CutC (Salmonella paratyphi A (strain AKU_12601)).